Consider the following 513-residue polypeptide: MGPTKYIIIAVVIIIICVILGLYVVDKKAKEKLSEASKEARRLKEEAERDAEAKKKEAILEAKEEAHKLRAEVERENRERRNEVQRLERRIIQKEEALDKKSEALENKEEALNKKQQKIEDVEAHMEELHEKQRTELERISGLTTEQAKEFLLEQVRKEVKHETAVMIKEIETKAKEEADKRAREVITYAIQRCAADHVAETTVHVVNLPNDEMKGRIIGREGRNIRTLETLTGVDLIIDDTPEAVILSGFDPIRREVARIALEKLIVDGRIHPARIEEMVEKAKKEVEVSIKEEGEQATFETGIHGLHIELIRLLGRLKYRTSYGQNVLKHSIEVSHLAGLMASELGIDPTLAKRVGLLHDIGKAVDHEVEGPHAIIGSEIAKKYRESALVVNAIGAHHGDMEPQSLEAILVQAADAISAARPGARRETLEAYIKRLEKLEEIANECEGVEKSYAIQAGREIRIMVKPEVLDDTGCIEMARNIVKQIESELEYPGQIKVNVIRETRAIEYAK.

The chain crosses the membrane as a helical span at residues 6 to 26 (YIIIAVVIIIICVILGLYVVD). Residues 203-288 (TVHVVNLPND…EMVEKAKKEV (86 aa)) enclose the KH domain. The region spanning 329-422 (VLKHSIEVSH…VQAADAISAA (94 aa)) is the HD domain.

Belongs to the RNase Y family.

It is found in the cell membrane. Functionally, endoribonuclease that initiates mRNA decay. This Clostridium botulinum (strain Langeland / NCTC 10281 / Type F) protein is Ribonuclease Y.